We begin with the raw amino-acid sequence, 886 residues long: Isoleucine--tRNA ligase (886 aa).

The short motif at 60–70 (PYANGDIHIGH) is the 'HIGH' region element. Glutamate 546 is a binding site for L-isoleucyl-5'-AMP. The short motif at 587 to 591 (KMSKS) is the 'KMSKS' region element. Position 590 (lysine 590) interacts with ATP. Zn(2+)-binding residues include cysteine 856, cysteine 859, cysteine 870, and cysteine 873.

This sequence belongs to the class-I aminoacyl-tRNA synthetase family. IleS type 1 subfamily. As to quaternary structure, monomer. Zn(2+) is required as a cofactor.

The protein resides in the cytoplasm. The catalysed reaction is tRNA(Ile) + L-isoleucine + ATP = L-isoleucyl-tRNA(Ile) + AMP + diphosphate. Functionally, catalyzes the attachment of isoleucine to tRNA(Ile). As IleRS can inadvertently accommodate and process structurally similar amino acids such as valine, to avoid such errors it has two additional distinct tRNA(Ile)-dependent editing activities. One activity is designated as 'pretransfer' editing and involves the hydrolysis of activated Val-AMP. The other activity is designated 'posttransfer' editing and involves deacylation of mischarged Val-tRNA(Ile). The polypeptide is Isoleucine--tRNA ligase (Mesomycoplasma hyopneumoniae (strain 7448) (Mycoplasma hyopneumoniae)).